The sequence spans 321 residues: NADPH-dependent codeinone reductase 1-4 (321 aa).

Thr-27 and Asp-51 together coordinate NADPH. Catalysis depends on proton donor residues Tyr-56 and His-119. A substrate-binding site is contributed by His-119. NADPH is bound by residues Ser-165, Gln-187, Ser-214, Leu-216, Ser-264, and Arg-269. Residues 299–321 (SADFLLSPTGPFKTEEEFWDEKD) are disordered.

This sequence belongs to the aldo/keto reductase family. Latex secreting cells (laticifer cells). Expressed constitutively in all organs with highest levels in capsules. Restricted to the parietal region of sieve elements adjacent or proximal to laticifers in roots, stems, leaves and carpels.

Its subcellular location is the cytoplasm. The protein resides in the cytosol. It catalyses the reaction codeine + NADP(+) = codeinone + NADPH + H(+). It carries out the reaction neopine + NADP(+) = neopinone + NADPH + H(+). The catalysed reaction is morphine + NADP(+) = morphinone + NADPH + H(+). The enzyme catalyses neomorphine + NADP(+) = neomorphinone + NADPH + H(+). Its pathway is alkaloid biosynthesis; morphine biosynthesis. Its function is as follows. NADPH-dependent codeinone reductase involved in biosynthesis of morphinan-type benzylisoquinoline and opiate alkaloids natural products. Reduces codeinone to codeine in the penultimate step in morphine biosynthesis. Can use morphinone, hydrocodone and hydromorphone as substrate during reductive reaction with NADPH as cofactor, and morphine and dihydrocodeine as substrate during oxidative reaction with NADP as cofactor. Converts morphinone to morphine, and neomorphinone to neomorphine. Reduces irreversibly neopinone, a spontaneous isomer of codeinone, to neopine; in planta, neopine levels are limited to low levels. The protein is NADPH-dependent codeinone reductase 1-4 of Papaver somniferum (Opium poppy).